The following is a 553-amino-acid chain: Undecaprenyl phosphate-alpha-4-amino-4-deoxy-L-arabinose arabinosyl transferase (553 aa).

12 helical membrane passes run 8–28 (LLFSLFYALYYLIPLELRALW), 81–101 (FAVRIGSVFSITLSALLVYWL), 113–133 (LLSAVVFLTCLLVYGVGSYAV), 136–156 (PMVTLWLVAAMCSFWLAAQSA), 176–196 (LMTKGFLALAVPVVAIVPWMI), 204–224 (LLLFGPLALVSAALITAPWAI), 255–275 (APFWYYLPMLLAGALPWVGLL), 289–309 (NSGSLYLLCWTVMPLLFFSLA), 313–333 (LPTYILPCFAPLAILLAHHGI), 351–371 (VAFGVIAALAVILVLAPWGLV), 384–404 (VLLGASAFLFWAAVGLACLVA), and 412–432 (AALCPLGLALLAGAVIPDKVI).

Belongs to the glycosyltransferase 83 family.

The protein localises to the cell inner membrane. It carries out the reaction 4-amino-4-deoxy-alpha-L-arabinopyranosyl di-trans,octa-cis-undecaprenyl phosphate + lipid IVA = lipid IIA + di-trans,octa-cis-undecaprenyl phosphate.. It functions in the pathway lipopolysaccharide metabolism; 4-amino-4-deoxy-beta-L-arabinose-lipid A biosynthesis. Catalyzes the transfer of the L-Ara4N moiety of the glycolipid undecaprenyl phosphate-alpha-L-Ara4N to lipid A. The modified arabinose is attached to lipid A and is required for resistance to polymyxin and cationic antimicrobial peptides. The polypeptide is Undecaprenyl phosphate-alpha-4-amino-4-deoxy-L-arabinose arabinosyl transferase (Erwinia tasmaniensis (strain DSM 17950 / CFBP 7177 / CIP 109463 / NCPPB 4357 / Et1/99)).